Reading from the N-terminus, the 302-residue chain is Chloramphenicol resistance protein (302 aa).

It is found in the cell membrane. Its function is as follows. This protein is thought to be a membrane-associated barrier of drug uptake. The polypeptide is Chloramphenicol resistance protein (cml) (Escherichia coli).